A 110-amino-acid polypeptide reads, in one-letter code: UPF0213 protein DP2720 (110 aa).

Residues 12–88 enclose the GIY-YIG domain; that stretch reads PAWFVYIVQC…KQLSPTRKRT (77 aa).

It belongs to the UPF0213 family.

The polypeptide is UPF0213 protein DP2720 (Desulfotalea psychrophila (strain LSv54 / DSM 12343)).